Reading from the N-terminus, the 291-residue chain is S-methyl-5'-thioadenosine phosphorylase (291 aa).

Phosphate contacts are provided by residues Ser12, 54 to 55 (RH), and 87 to 88 (SA). Met185 is a substrate binding site. Thr186 is a phosphate binding site. Substrate is bound at residue 209 to 211 (DFD).

It belongs to the PNP/MTAP phosphorylase family. MTAP subfamily. As to quaternary structure, homohexamer. Dimer of a homotrimer.

The enzyme catalyses S-methyl-5'-thioadenosine + phosphate = 5-(methylsulfanyl)-alpha-D-ribose 1-phosphate + adenine. It participates in amino-acid biosynthesis; L-methionine biosynthesis via salvage pathway; S-methyl-5-thio-alpha-D-ribose 1-phosphate from S-methyl-5'-thioadenosine (phosphorylase route): step 1/1. In terms of biological role, catalyzes the reversible phosphorylation of S-methyl-5'-thioadenosine (MTA) to adenine and 5-methylthioribose-1-phosphate. Involved in the breakdown of MTA, a major by-product of polyamine biosynthesis. Responsible for the first step in the methionine salvage pathway after MTA has been generated from S-adenosylmethionine. Has broad substrate specificity with 6-aminopurine nucleosides as preferred substrates. In Bradyrhizobium diazoefficiens (strain JCM 10833 / BCRC 13528 / IAM 13628 / NBRC 14792 / USDA 110), this protein is S-methyl-5'-thioadenosine phosphorylase.